A 69-amino-acid polypeptide reads, in one-letter code: Sec-independent protein translocase protein TatA (69 aa).

A helical transmembrane segment spans residues 1-21 (MFGKLGMPELVLIFAVALVIF).

This sequence belongs to the TatA/E family. As to quaternary structure, forms a complex with TatC.

The protein localises to the cell membrane. Part of the twin-arginine translocation (Tat) system that transports large folded proteins containing a characteristic twin-arginine motif in their signal peptide across membranes. TatA could form the protein-conducting channel of the Tat system. This chain is Sec-independent protein translocase protein TatA, found in Alkaliphilus metalliredigens (strain QYMF).